Reading from the N-terminus, the 318-residue chain is MATAEKKQPSVIVILGPTASGKSALALAVAKKIGGEIISADSRQIYREFDIGAAKPSESALGEIRHHFVNEKNIGEPFTAGDFATEAAERIITLHRRGKRAVVAGGSTLYLEGLIEGFADLPPANPEIRARLLGELEEEGNEKLYAKLFERDPDQAATLDPTKSQRLIRSLEIIEITGLSVTELQARAKKRQHGDLCFVTTGLAMERATLYQRINHRTDNMIDAGLYDEAKGLYHKYHKLIASGKVSSLQSVGYQEFFQYLDGMISFDDAVRLIKQHTRNYAKRQLTFFHNRLSVNWTDAPLNSKELDSLAERLSKGP.

Gly16 to Ser23 serves as a coordination point for ATP. Thr18–Ser23 contacts substrate. Interaction with substrate tRNA stretches follow at residues Asp41 to Gln44 and Gln165 to Arg169.

The protein belongs to the IPP transferase family. In terms of assembly, monomer. Mg(2+) serves as cofactor.

It catalyses the reaction adenosine(37) in tRNA + dimethylallyl diphosphate = N(6)-dimethylallyladenosine(37) in tRNA + diphosphate. In terms of biological role, catalyzes the transfer of a dimethylallyl group onto the adenine at position 37 in tRNAs that read codons beginning with uridine, leading to the formation of N6-(dimethylallyl)adenosine (i(6)A). This Pelodictyon phaeoclathratiforme (strain DSM 5477 / BU-1) protein is tRNA dimethylallyltransferase.